The chain runs to 122 residues: Phosphoribosyl-ATP pyrophosphatase (122 aa).

The protein belongs to the PRA-PH family.

It is found in the cytoplasm. It carries out the reaction 1-(5-phospho-beta-D-ribosyl)-ATP + H2O = 1-(5-phospho-beta-D-ribosyl)-5'-AMP + diphosphate + H(+). It participates in amino-acid biosynthesis; L-histidine biosynthesis; L-histidine from 5-phospho-alpha-D-ribose 1-diphosphate: step 2/9. The protein is Phosphoribosyl-ATP pyrophosphatase of Cupriavidus metallidurans (strain ATCC 43123 / DSM 2839 / NBRC 102507 / CH34) (Ralstonia metallidurans).